The chain runs to 106 residues: Large ribosomal subunit protein bL21 (106 aa).

It belongs to the bacterial ribosomal protein bL21 family. In terms of assembly, part of the 50S ribosomal subunit. Contacts protein L20.

In terms of biological role, this protein binds to 23S rRNA in the presence of protein L20. This Chlamydia pneumoniae (Chlamydophila pneumoniae) protein is Large ribosomal subunit protein bL21.